The following is a 629-amino-acid chain: Probable potassium transport system protein Kup 3 (629 aa).

A run of 12 helical transmembrane segments spans residues 20–40 (LSLSALGIVYGDIGTSPLYTF), 61–81 (VSLIIWTLIIIASVKYIHFAL), 106–126 (PFIIAVGLMGAALIYGDGTIT), 143–163 (PSLKYYVLPIAITILITLFAI), 171–191 (IGKAFGPVMAFWFLTIGILGA), 209–229 (GLSFLFSNGATGFFILCGVFL), 253–273 (WFGLAFPSLIFNYLGQAALVL), 291–311 (FLLPLIILSTVATIIASQAII), 343–363 (IYIGVVNWLLMLATLGLTIGF), 372–392 (AYGIAVSATMLCTTLLLFIAL), 400–420 (IITSGLVAGLFMIVDASFFAA), and 425–445 (FINGGYIPITLAIIIYSMMYI).

Belongs to the HAK/KUP transporter (TC 2.A.72) family.

Its subcellular location is the cell inner membrane. The enzyme catalyses K(+)(in) + H(+)(in) = K(+)(out) + H(+)(out). Functionally, transport of potassium into the cell. Likely operates as a K(+):H(+) symporter. The protein is Probable potassium transport system protein Kup 3 of Legionella pneumophila subsp. pneumophila (strain Philadelphia 1 / ATCC 33152 / DSM 7513).